Here is a 99-residue protein sequence, read N- to C-terminus: A-type ATP synthase subunit F (99 aa).

It belongs to the V-ATPase F subunit family. As to quaternary structure, has multiple subunits with at least A(3), B(3), C, D, E, F, H, I and proteolipid K(x).

It localises to the cell membrane. In terms of biological role, component of the A-type ATP synthase that produces ATP from ADP in the presence of a proton gradient across the membrane. This chain is A-type ATP synthase subunit F, found in Methanococcus maripaludis (strain C6 / ATCC BAA-1332).